The primary structure comprises 490 residues: Glutamate--tRNA ligase (490 aa).

Positions P15 to G25 match the 'HIGH' region motif. Residues K259–R263 carry the 'KMSKS' region motif. An ATP-binding site is contributed by K262.

It belongs to the class-I aminoacyl-tRNA synthetase family. Glutamate--tRNA ligase type 1 subfamily. In terms of assembly, monomer.

It is found in the cytoplasm. It catalyses the reaction tRNA(Glu) + L-glutamate + ATP = L-glutamyl-tRNA(Glu) + AMP + diphosphate. Functionally, catalyzes the attachment of glutamate to tRNA(Glu) in a two-step reaction: glutamate is first activated by ATP to form Glu-AMP and then transferred to the acceptor end of tRNA(Glu). This chain is Glutamate--tRNA ligase, found in Bdellovibrio bacteriovorus (strain ATCC 15356 / DSM 50701 / NCIMB 9529 / HD100).